Consider the following 398-residue polypeptide: Dihydrolipoyllysine-residue succinyltransferase component of 2-oxoglutarate dehydrogenase complex (398 aa).

The region spanning 2–77 (SIKIIIPSLG…TVGEEVGEIN (76 aa)) is the Lipoyl-binding domain. K43 is modified (N6-lipoyllysine). The Peripheral subunit-binding (PSBD) domain maps to 112 to 149 (ILAPSVQKLVTENKLDPNNIKGTGRGGRITKYDVLETI). Catalysis depends on residues H369 and D373.

The protein belongs to the 2-oxoacid dehydrogenase family. Forms a 24-polypeptide structural core with octahedral symmetry. Part of the 2-oxoglutarate dehydrogenase (OGDH) complex composed of E1 (2-oxoglutarate dehydrogenase), E2 (dihydrolipoamide succinyltransferase) and E3 (dihydrolipoamide dehydrogenase); the complex contains multiple copies of the three enzymatic components (E1, E2 and E3). It depends on (R)-lipoate as a cofactor.

It carries out the reaction N(6)-[(R)-dihydrolipoyl]-L-lysyl-[protein] + succinyl-CoA = N(6)-[(R)-S(8)-succinyldihydrolipoyl]-L-lysyl-[protein] + CoA. It functions in the pathway amino-acid degradation; L-lysine degradation via saccharopine pathway; glutaryl-CoA from L-lysine: step 6/6. Its function is as follows. E2 component of the 2-oxoglutarate dehydrogenase (OGDH) complex which catalyzes the second step in the conversion of 2-oxoglutarate to succinyl-CoA and CO(2). The protein is Dihydrolipoyllysine-residue succinyltransferase component of 2-oxoglutarate dehydrogenase complex (sucB) of Rickettsia typhi (strain ATCC VR-144 / Wilmington).